Consider the following 121-residue polypeptide: Small ribosomal subunit protein bS6 (121 aa).

Belongs to the bacterial ribosomal protein bS6 family.

Its function is as follows. Binds together with bS18 to 16S ribosomal RNA. The polypeptide is Small ribosomal subunit protein bS6 (Pelagibacter ubique (strain HTCC1062)).